A 524-amino-acid chain; its full sequence is Peptide chain release factor 3 (524 aa).

The tr-type G domain maps to 11 to 278 (AKRRTFAIIS…SFVQYAPEPG (268 aa)). GTP is bound by residues 20–27 (SHPDAGKT), 88–92 (DTPGH), and 142–145 (NKLD).

This sequence belongs to the TRAFAC class translation factor GTPase superfamily. Classic translation factor GTPase family. PrfC subfamily.

Its subcellular location is the cytoplasm. In terms of biological role, increases the formation of ribosomal termination complexes and stimulates activities of RF-1 and RF-2. It binds guanine nucleotides and has strong preference for UGA stop codons. It may interact directly with the ribosome. The stimulation of RF-1 and RF-2 is significantly reduced by GTP and GDP, but not by GMP. The chain is Peptide chain release factor 3 from Lacticaseibacillus paracasei (strain ATCC 334 / BCRC 17002 / CCUG 31169 / CIP 107868 / KCTC 3260 / NRRL B-441) (Lactobacillus paracasei).